The following is a 245-amino-acid chain: DNA polymerase sliding clamp 1 (245 aa).

It belongs to the PCNA family. In terms of assembly, the subunits circularize to form a toroid; DNA passes through its center. Replication factor C (RFC) is required to load the toroid on the DNA. Forms a dimeric complex with PCNA3 and a trimeric complex with PCNA2 and PCNA3; does not form homotrimers.

Its function is as follows. Sliding clamp subunit that acts as a moving platform for DNA processing. Responsible for tethering the catalytic subunit of DNA polymerase and other proteins to DNA during high-speed replication. The trimeric complex inhibits DNA ligase and both 3'-5' and 5'-3' activity of Hel308 (Hjm) helicase, but stimulates Hjc, the Holliday junction cleavage enzyme. The protein is DNA polymerase sliding clamp 1 of Sulfurisphaera tokodaii (strain DSM 16993 / JCM 10545 / NBRC 100140 / 7) (Sulfolobus tokodaii).